Here is a 149-residue protein sequence, read N- to C-terminus: Extracellular protease inhibitor 1 (149 aa).

A signal peptide spans 1-16; sequence MKSALLFTLVVAAVHA. Kazal-like domains are found at residues 29-86 and 88-141; these read ESNE…SSTG and QPPS…ACVG. Disulfide bonds link Cys35–Cys65 and Cys39–Cys58. An N-linked (GlcNAc...) asparagine glycan is attached at Asn67. Disulfide bonds link Cys94–Cys124, Cys98–Cys117, and Cys106–Cys139.

As to quaternary structure, interacts with host subtilisin-like protease P69B.

It localises to the secreted. Secreted effector that interacts with and inhibits the pathogenesis-related P69B subtilisin-like serine protease of host tomato. Inhibition of host proteases by a pathogen extracellular protease inhibitor forms a specific type of defense-counterdefense mechanism between plants and microbial pathogens. This Phytophthora infestans (Potato late blight agent) protein is Extracellular protease inhibitor 1.